The chain runs to 423 residues: 3-phosphoshikimate 1-carboxyvinyltransferase (423 aa).

3-phosphoshikimate-binding residues include Lys28, Ser29, and Arg33. Phosphoenolpyruvate is bound at residue Lys28. Residues Gly96 and Arg124 each contribute to the phosphoenolpyruvate site. The 3-phosphoshikimate site is built by Ser169, Ser170, Gln171, Ser198, Glu312, and His339. Gln171 contacts phosphoenolpyruvate. Glu312 functions as the Proton acceptor in the catalytic mechanism. The phosphoenolpyruvate site is built by Arg343, Arg384, and Lys409.

Belongs to the EPSP synthase family. In terms of assembly, monomer.

The protein resides in the cytoplasm. It catalyses the reaction 3-phosphoshikimate + phosphoenolpyruvate = 5-O-(1-carboxyvinyl)-3-phosphoshikimate + phosphate. The protein operates within metabolic intermediate biosynthesis; chorismate biosynthesis; chorismate from D-erythrose 4-phosphate and phosphoenolpyruvate: step 6/7. Catalyzes the transfer of the enolpyruvyl moiety of phosphoenolpyruvate (PEP) to the 5-hydroxyl of shikimate-3-phosphate (S3P) to produce enolpyruvyl shikimate-3-phosphate and inorganic phosphate. The polypeptide is 3-phosphoshikimate 1-carboxyvinyltransferase (Acidothermus cellulolyticus (strain ATCC 43068 / DSM 8971 / 11B)).